The chain runs to 123 residues: DNA-directed RNA polymerase I subunit RPA12 (123 aa).

Zn(2+) contacts are provided by Cys17, Cys20, Cys35, Cys38, Cys84, and Cys87. The C4-type zinc finger occupies 17 to 38 (CPDCGSVLPLPGIQDTVICSRC). The TFIIS-type zinc-finger motif lies at 80-120 (IDRRCPRCGHEGMAYHTRQMRSADEGQTVFYTCINCKFQEK). Positions 103–104 (DE) match the Hairpin motif. Zn(2+) is bound by residues Cys112 and Cys115.

It belongs to the archaeal RpoM/eukaryotic RPA12/RPB9/RPC11 RNA polymerase family. As to quaternary structure, component of the RNA polymerase I (Pol I) complex consisting of 13 subunits: a ten-subunit catalytic core composed of POLR1A/RPA1, POLR1B/RPA2, POLR1C/RPAC1, POLR1D/RPAC2, POLR1H/RPA12, POLR2E/RPABC1, POLR2F/RPABC2, POLR2H/RPABC3, POLR2K/RPABC4 and POLR2L/RPABC5; a mobile stalk subunit POLR1F/RPA43 protruding from the core and additional subunits homologous to general transcription factors POLR1E/RPA49 and POLR1G/RPA34. Part of Pol I pre-initiation complex (PIC), in which Pol I core assembles with RRN3 and promoter-bound UTBF and SL1/TIF-IB complex.

It localises to the nucleus. The protein localises to the nucleolus. Functionally, core component of RNA polymerase I (Pol I), a DNA-dependent RNA polymerase which synthesizes ribosomal RNA precursors using the four ribonucleoside triphosphates as substrates. Can mediate Pol I proofreading of the nascent RNA transcript. Anchors into the Pol I active site to monitor transcription fidelity and cleave mis-incorporated 5'-ribonucleotides. The chain is DNA-directed RNA polymerase I subunit RPA12 from Mus musculus (Mouse).